A 369-amino-acid polypeptide reads, in one-letter code: Gap junction alpha-5 protein (369 aa).

Residues 2-19 (GDWSFLGEFLEEVHKHST) lie on the Cytoplasmic side of the membrane. A helical membrane pass occupies residues 20 to 40 (VVGKVWLTVLFIFRMLVLGTA). The Extracellular segment spans residues 41–76 (AGPLWGDEQSDFMCDTQQPGCENVCYDKAFPISHVR). The helical transmembrane segment at 77–97 (FWVLQIIFVSTPSLVYMGHAM) threads the bilayer. Residues 98–169 (HTVRMEEKRK…YSILIRTAME (72 aa)) lie on the Cytoplasmic side of the membrane. Residues 170 to 190 (IAFIVGQYILYGIFLETLYIC) form a helical membrane-spanning segment. At 191–210 (QRAPCPHPVNCYVSRPTEKN) the chain is on the extracellular side. A helical membrane pass occupies residues 211-231 (VFIIFMLAVAVLSLFLSLAEL). The Cytoplasmic segment spans residues 232–369 (YHLGWKKAKE…SKARSDDLSV (138 aa)). A disordered region spans residues 347-369 (NEKRRFSKASRASSKARSDDLSV).

Belongs to the connexin family. Alpha-type (group II) subfamily. As to quaternary structure, a connexon is composed of a hexamer of connexins. Mostly in heart, and in the whole embryo, liver, stomach, and pectoral muscle.

It is found in the cell membrane. It localises to the cell junction. The protein localises to the gap junction. Functionally, one gap junction consists of a cluster of closely packed pairs of transmembrane channels, the connexons, through which materials of low MW diffuse from one cell to a neighboring cell. The sequence is that of Gap junction alpha-5 protein (GJA5) from Gallus gallus (Chicken).